The sequence spans 224 residues: Cytochrome c oxidase subunit 2 (224 aa).

The Mitochondrial intermembrane portion of the chain corresponds to 1 to 26 (MSTWGQMNLMDPASPIQIEMMLFHDH). Residues 27-48 (AMAILIGIFTLVSCLGVKLCFN) traverse the membrane as a helical segment. The Mitochondrial matrix portion of the chain corresponds to 49–62 (TLSTRTMHEAQLLE). Residues 63 to 82 (TLWTILPAFLLVWLALPSLR) form a helical membrane-spanning segment. Residues 83 to 224 (LLYLLDEQSS…DVKDFINMCN (142 aa)) are Mitochondrial intermembrane-facing. Residues His-161, Cys-196, Glu-198, Cys-200, His-204, and Met-207 each contribute to the Cu cation site. Glu-198 is a Mg(2+) binding site.

Belongs to the cytochrome c oxidase subunit 2 family. Component of the cytochrome c oxidase (complex IV, CIV), a multisubunit enzyme composed of a catalytic core of 3 subunits and several supernumerary subunits. The complex exists as a monomer or a dimer and forms supercomplexes (SCs) in the inner mitochondrial membrane with ubiquinol-cytochrome c oxidoreductase (cytochrome b-c1 complex, complex III, CIII). It depends on Cu cation as a cofactor.

The protein localises to the mitochondrion inner membrane. It catalyses the reaction 4 Fe(II)-[cytochrome c] + O2 + 8 H(+)(in) = 4 Fe(III)-[cytochrome c] + 2 H2O + 4 H(+)(out). Its function is as follows. Component of the cytochrome c oxidase, the last enzyme in the mitochondrial electron transport chain which drives oxidative phosphorylation. The respiratory chain contains 3 multisubunit complexes succinate dehydrogenase (complex II, CII), ubiquinol-cytochrome c oxidoreductase (cytochrome b-c1 complex, complex III, CIII) and cytochrome c oxidase (complex IV, CIV), that cooperate to transfer electrons derived from NADH and succinate to molecular oxygen, creating an electrochemical gradient over the inner membrane that drives transmembrane transport and the ATP synthase. Cytochrome c oxidase is the component of the respiratory chain that catalyzes the reduction of oxygen to water. Electrons originating from reduced cytochrome c in the intermembrane space (IMS) are transferred via the dinuclear copper A center (CU(A)) of subunit 2 and heme A of subunit 1 to the active site in subunit 1, a binuclear center (BNC) formed by heme A3 and copper B (CU(B)). The BNC reduces molecular oxygen to 2 water molecules using 4 electrons from cytochrome c in the IMS and 4 protons from the mitochondrial matrix. The polypeptide is Cytochrome c oxidase subunit 2 (COII) (Albinaria turrita (Door snail)).